Reading from the N-terminus, the 1082-residue chain is Putative white-brown complex homolog protein 30 (1082 aa).

The next 2 membrane-spanning stretches (helical) occupy residues H12–G32 and N292–Y312. Positions S329–K348 are enriched in basic and acidic residues. Residues S329–T437 are disordered. Residues V484–D726 form the ABC transporter domain. Residue G518–T525 participates in ATP binding. The ABC transmembrane type-2 domain occupies R832–A1029. The next 5 helical transmembrane spans lie at A853–N873, I877–A897, Y958–L978, Y979–A999, and W1054–F1074.

Belongs to the ABC transporter superfamily. ABCG family. Eye pigment precursor importer (TC 3.A.1.204) subfamily.

It localises to the membrane. The protein is Putative white-brown complex homolog protein 30 (WBC30) of Arabidopsis thaliana (Mouse-ear cress).